A 653-amino-acid polypeptide reads, in one-letter code: Macrolide export ATP-binding/permease protein MacB (653 aa).

In terms of domain architecture, ABC transporter spans 6 to 244; that stretch reads LQLTRVTRRF…DAASGASGDA (239 aa). 42–49 contacts ATP; sequence GASGSGKS. Transmembrane regions (helical) follow at residues 278 to 298, 526 to 546, 587 to 607, and 616 to 636; these read LLTM…VAIG, LTLL…IGVM, MGGA…SLFV, and AGSI…FGFM.

The protein belongs to the ABC transporter superfamily. Macrolide exporter (TC 3.A.1.122) family. In terms of assembly, homodimer.

It localises to the cell inner membrane. Its function is as follows. Non-canonical ABC transporter that contains transmembrane domains (TMD), which form a pore in the inner membrane, and an ATP-binding domain (NBD), which is responsible for energy generation. Confers resistance against macrolides. This chain is Macrolide export ATP-binding/permease protein MacB, found in Burkholderia thailandensis (strain ATCC 700388 / DSM 13276 / CCUG 48851 / CIP 106301 / E264).